Here is a 118-residue protein sequence, read N- to C-terminus: Large ribosomal subunit protein bL20 (118 aa).

It belongs to the bacterial ribosomal protein bL20 family.

In terms of biological role, binds directly to 23S ribosomal RNA and is necessary for the in vitro assembly process of the 50S ribosomal subunit. It is not involved in the protein synthesizing functions of that subunit. The polypeptide is Large ribosomal subunit protein bL20 (Desulfovibrio desulfuricans (strain ATCC 27774 / DSM 6949 / MB)).